The primary structure comprises 325 residues: NADH-quinone oxidoreductase subunit H (325 aa).

Transmembrane regions (helical) follow at residues 11-31 (ILLSILKAVVILLVVVTCGAF), 81-101 (VIFTLAPMIAFTSLLLAFAIV), 114-134 (IGILFFLMMAGLAVYAVLFAG), 154-174 (LSYEVFLGLSLMGVVAQAGSF), 186-206 (IWNVIPQFFGFVTFAIAGVAV), 237-257 (FFVGEYIGIVTISALMVTLFF), 265-285 (LPPFIWFALKTAFFMMMFILI), and 304-324 (VCLPLTLVNLLVTAAVILWQA).

This sequence belongs to the complex I subunit 1 family. In terms of assembly, NDH-1 is composed of 13 different subunits. Subunits NuoA, H, J, K, L, M, N constitute the membrane sector of the complex.

The protein localises to the cell inner membrane. The enzyme catalyses a quinone + NADH + 5 H(+)(in) = a quinol + NAD(+) + 4 H(+)(out). Its function is as follows. NDH-1 shuttles electrons from NADH, via FMN and iron-sulfur (Fe-S) centers, to quinones in the respiratory chain. The immediate electron acceptor for the enzyme in this species is believed to be ubiquinone. Couples the redox reaction to proton translocation (for every two electrons transferred, four hydrogen ions are translocated across the cytoplasmic membrane), and thus conserves the redox energy in a proton gradient. This subunit may bind ubiquinone. This Enterobacter sp. (strain 638) protein is NADH-quinone oxidoreductase subunit H.